The chain runs to 217 residues: Cytidylate kinase (217 aa).

10 to 18 (GPAGAGKST) provides a ligand contact to ATP.

The protein belongs to the cytidylate kinase family. Type 1 subfamily.

The protein resides in the cytoplasm. It catalyses the reaction CMP + ATP = CDP + ADP. The enzyme catalyses dCMP + ATP = dCDP + ADP. The protein is Cytidylate kinase of Alkaliphilus oremlandii (strain OhILAs) (Clostridium oremlandii (strain OhILAs)).